A 234-amino-acid chain; its full sequence is GTP cyclohydrolase 1 type 2 homolog (234 aa).

Residues His61, His62, Asp80, His195, and Glu199 each coordinate a divalent metal cation.

Belongs to the GTP cyclohydrolase I type 2/NIF3 family. As to quaternary structure, homohexamer.

The chain is GTP cyclohydrolase 1 type 2 homolog from Methanothermobacter thermautotrophicus (strain ATCC 29096 / DSM 1053 / JCM 10044 / NBRC 100330 / Delta H) (Methanobacterium thermoautotrophicum).